A 132-amino-acid chain; its full sequence is 3-aminoacrylate deaminase RutC (132 aa).

It belongs to the RutC family.

The enzyme catalyses (Z)-3-aminoacrylate + H2O + H(+) = 3-oxopropanoate + NH4(+). In terms of biological role, involved in pyrimidine catabolism. Catalyzes the deamination of 3-aminoacrylate to malonic semialdehyde, a reaction that can also occur spontaneously. RutC may facilitate the reaction and modulate the metabolic fitness, rather than catalyzing essential functions. The chain is 3-aminoacrylate deaminase RutC from Cronobacter sakazakii (strain ATCC BAA-894) (Enterobacter sakazakii).